The sequence spans 588 residues: Sperm-associated microtubule inner protein 4 (588 aa).

Thr-219 carries the phosphothreonine modification. A phosphoserine mark is found at Ser-224, Ser-406, Ser-421, Ser-427, and Ser-437. Phosphotyrosine is present on Tyr-441. Phosphoserine is present on residues Ser-457 and Ser-484. Thr-512 carries the phosphothreonine modification. Ser-516 is modified (phosphoserine). Lys-543 is covalently cross-linked (Glycyl lysine isopeptide (Lys-Gly) (interchain with G-Cter in SUMO2)). Phosphoserine is present on Ser-545.

It localises to the cytoplasm. The protein localises to the cytoskeleton. The protein resides in the microtubule organizing center. It is found in the centrosome. Its subcellular location is the flagellum axoneme. In terms of biological role, microtubule inner protein (MIP) part of the dynein-decorated doublet microtubules (DMTs) in flagellum axoneme. May serve to reinforce and thus stabilize the microtubule structure in the sperm flagella. The chain is Sperm-associated microtubule inner protein 4 (Spmip4) from Rattus norvegicus (Rat).